The sequence spans 1792 residues: E3 ubiquitin-protein ligase RBBP6 (1792 aa).

The region spanning 4-76 (VHYKFSSKLN…NSSVIVRRIP (73 aa)) is the DWNN domain. Lys-130 is subject to N6-acetyllysine. The CCHC-type zinc-finger motif lies at 159 to 176 (YTCFRCGKPGHYIKNCPT). Ser-244, Ser-245, Ser-246, and Ser-247 each carry phosphoserine. The segment at 259–300 (CLICKDIMTDAVVIPCCGNSYCDECIRTALLESDEHTCPTCH) adopts an RING-type; degenerate zinc-finger fold. Residues 326–347 (TGYTKRLRKQLPPPPPPIPPPR) are disordered. The span at 336 to 347 (LPPPPPPIPPPR) shows a compositional bias: pro residues. Ser-360 is subject to Phosphoserine. Residues 371-410 (IPVTSSSTHPAPSISSLTSNQSSLAPPVSGNPSSAPAPVP) are disordered. A compositionally biased stretch (low complexity) spans 374-393 (TSSSTHPAPSISSLTSNQSS). Ser-516 is modified (phosphoserine). 3 disordered regions span residues 532 to 601 (INRG…SVPP), 621 to 640 (QTAH…SREE), and 645 to 799 (QRRL…FNRY). The interval 549 to 571 (SLPATPVFVPVPPPPLYPPPPHT) is (Microbial infection) Interaction with Ebolavirus VP30. Positions 557–601 (VPVPPPPLYPPPPHTLPLPPGVPPPQFSPQFPPGQPPPAGYSVPP) are enriched in pro residues. Residues 560-565 (PPPPLY) carry the PPxPxY motif. Residues 621–634 (QTAHSNTIPTTQAP) show a composition bias toward polar residues. Basic and acidic residues predominate over residues 645-675 (QRRLKEEEKKKSKLDEFTNDFAKELMEYKKI). The segment covering 685-719 (RSKSPYSGSSYSRSSYTYSKSRSGSTRSRSYSRSF) has biased composition (low complexity). Basic residues predominate over residues 735–770 (RRGRGKSRNYRSRSRSHGYHRSRSRSPPYRRYHSRS). 4 positions are modified to phosphoserine: Ser-768, Ser-770, Ser-772, and Ser-780. Basic and acidic residues predominate over residues 790–799 (ETEREYFNRY). 3 positions are modified to phosphoserine: Ser-815, Ser-861, and Ser-873. 4 disordered regions span residues 847-1290 (AGAQ…DTKR), 1321-1348 (WDKD…PASV), 1360-1665 (VKYP…SKDL), and 1682-1792 (VVQV…SVTV). A compositionally biased stretch (basic and acidic residues) spans 902 to 922 (LSARDGHNQKDNTKSKEKESE). Positions 931 to 940 (NKHKKHRKRR) are enriched in basic residues. Basic and acidic residues-rich tracts occupy residues 955 to 971 (ETSR…ENKT), 979 to 990 (SRDDATPVRDEP), 1001 to 1017 (VSEK…AKGD), 1041 to 1071 (PQEK…KTDN), and 1095 to 1161 (SAKE…KDFE). A Phosphoserine modification is found at Ser-957. The interval 982–1139 (DATPVRDEPM…AKKPNEKNKP (158 aa)) is interaction with RB1. Thr-984 is subject to Phosphothreonine. Residues Lys-1106 and Lys-1169 each participate in a glycyl lysine isopeptide (Lys-Gly) (interchain with G-Cter in SUMO2) cross-link. The residue at position 1179 (Ser-1179) is a Phosphoserine. Residues 1182–1200 (RKMEPDTEKMDRTPEKDKI) show a composition bias toward basic and acidic residues. A Phosphoserine modification is found at Ser-1221. Over residues 1230–1248 (EPSEKLESTSSKVKQEKVK) the composition is skewed to basic and acidic residues. A compositionally biased stretch (polar residues) spans 1258–1276 (TEGSSSTLVDYTSTSSTGG). Thr-1271 bears the Phosphothreonine mark. Ser-1277 is modified (phosphoserine). Residues 1280–1290 (RKSEEKTDTKR) are compositionally biased toward basic and acidic residues. A phosphoserine mark is found at Ser-1328, Ser-1341, and Ser-1347. Composition is skewed to basic and acidic residues over residues 1362-1391 (YPEK…EVKS) and 1399-1435 (EKGK…DRLN). The tract at residues 1433–1544 (RLNEQGNFKS…SPSRDRKPHD (112 aa)) is interaction with p53. Residues 1436–1447 (EQGNFKSLSQSS) are compositionally biased toward polar residues. Basic and acidic residues-rich tracts occupy residues 1448-1459 (KEARTSDKHDST), 1468-1506 (TPNR…RNKD), and 1514-1580 (KPRE…RNNK). A Phosphothreonine modification is found at Thr-1468. Over residues 1618–1627 (LSHSSRLSSD) the composition is skewed to polar residues. The span at 1634-1646 (EAAFEPDYNESDS) shows a compositional bias: acidic residues. A phosphoserine mark is found at Ser-1646, Ser-1648, and Ser-1651. Residues 1692 to 1723 (SHSSPSVSPSRSHSPSGSQTRSHSSSASSAES) are compositionally biased toward low complexity. Residues 1727–1750 (KKKKKKKEKKKHKKHKKHKKHKKH) show a composition bias toward basic residues. The segment covering 1751-1760 (AGTEVELEKS) has biased composition (basic and acidic residues). The segment covering 1761-1773 (QKHKHKKKKSKKN) has biased composition (basic residues). Basic and acidic residues predominate over residues 1774–1792 (KDKEKEKEKDDQKVKSVTV).

As to quaternary structure, interacts with p53/TP53 and RB1. Interacts also with MDM2 and YBX1. Interacts with NEK6. Interacts with ZBTB38. (Microbial infection) [Isoform 1]: Interacts with ebolavirus VP30. In terms of processing, phosphorylated by NEK6. In terms of tissue distribution, highly expressed in the placenta and testis. Expressed at lower levels in the brain, heart, kidney, liver and lung. Overexpressed in esophageal cancer.

The protein resides in the nucleus. It localises to the nucleolus. The protein localises to the chromosome. Its subcellular location is the cytoplasm. It is found in the cytoskeleton. The protein resides in the microtubule organizing center. It localises to the centrosome. It catalyses the reaction S-ubiquitinyl-[E2 ubiquitin-conjugating enzyme]-L-cysteine + [acceptor protein]-L-lysine = [E2 ubiquitin-conjugating enzyme]-L-cysteine + N(6)-ubiquitinyl-[acceptor protein]-L-lysine.. It participates in protein modification; protein ubiquitination. In terms of biological role, E3 ubiquitin-protein ligase which promotes ubiquitination of YBX1, leading to its degradation by the proteasome. May play a role as a scaffold protein to promote the assembly of the p53/TP53-MDM2 complex, resulting in increase of MDM2-mediated ubiquitination and degradation of p53/TP53; may function as negative regulator of p53/TP53, leading to both apoptosis and cell growth. Regulates DNA-replication and the stability of chromosomal common fragile sites (CFSs) in a ZBTB38- and MCM10-dependent manner. Controls ZBTB38 protein stability and abundance via ubiquitination and proteasomal degradation, and ZBTB38 in turn negatively regulates the expression of MCM10 which plays an important role in DNA-replication. Its function is as follows. (Microbial infection) [Isoform 1]: Restricts ebolavirus replication probably by impairing the vp30-NP interaction, and thus viral transcription. The polypeptide is E3 ubiquitin-protein ligase RBBP6 (RBBP6) (Homo sapiens (Human)).